Reading from the N-terminus, the 62-residue chain is Photosystem II reaction center protein Z (62 aa).

Transmembrane regions (helical) follow at residues 8–28 (AVFA…VVFA) and 41–61 (FSGT…NSLI).

This sequence belongs to the PsbZ family. In terms of assembly, PSII is composed of 1 copy each of membrane proteins PsbA, PsbB, PsbC, PsbD, PsbE, PsbF, PsbH, PsbI, PsbJ, PsbK, PsbL, PsbM, PsbT, PsbY, PsbZ, Psb30/Ycf12, at least 3 peripheral proteins of the oxygen-evolving complex and a large number of cofactors. It forms dimeric complexes.

The protein resides in the plastid. Its subcellular location is the chloroplast thylakoid membrane. May control the interaction of photosystem II (PSII) cores with the light-harvesting antenna, regulates electron flow through the 2 photosystem reaction centers. PSII is a light-driven water plastoquinone oxidoreductase, using light energy to abstract electrons from H(2)O, generating a proton gradient subsequently used for ATP formation. The polypeptide is Photosystem II reaction center protein Z (Pisum sativum (Garden pea)).